A 164-amino-acid polypeptide reads, in one-letter code: Large ribosomal subunit protein uL10 (164 aa).

The protein belongs to the universal ribosomal protein uL10 family. In terms of assembly, part of the ribosomal stalk of the 50S ribosomal subunit. The N-terminus interacts with L11 and the large rRNA to form the base of the stalk. The C-terminus forms an elongated spine to which L12 dimers bind in a sequential fashion forming a multimeric L10(L12)X complex.

In terms of biological role, forms part of the ribosomal stalk, playing a central role in the interaction of the ribosome with GTP-bound translation factors. The protein is Large ribosomal subunit protein uL10 of Chromobacterium violaceum (strain ATCC 12472 / DSM 30191 / JCM 1249 / CCUG 213 / NBRC 12614 / NCIMB 9131 / NCTC 9757 / MK).